A 152-amino-acid chain; its full sequence is Large ribosomal subunit protein bL9 (152 aa).

The protein belongs to the bacterial ribosomal protein bL9 family.

Functionally, binds to the 23S rRNA. In Mycoplasmopsis synoviae (strain 53) (Mycoplasma synoviae), this protein is Large ribosomal subunit protein bL9.